The sequence spans 247 residues: Inhibitory synaptic factor 1 (247 aa).

Residues 30-65 are a coiled coil; sequence RAVIGQLEGILRDLKEVAKELKEVVEQIDRLTSDFE. Disordered stretches follow at residues 69–90, 112–166, and 180–217; these read DTDD…GGPL, ASTP…RDRV, and DDSE…GVRK. Residues 76–85 show a composition bias toward polar residues; the sequence is GTVSSTSSSE.

It belongs to the INSYN1 family.

Its subcellular location is the postsynaptic density. In terms of biological role, may be a component of the protein machinery at the inhibitory synapses, probably acting as a scaffold. The chain is Inhibitory synaptic factor 1 from Xenopus laevis (African clawed frog).